We begin with the raw amino-acid sequence, 154 residues long: Large ribosomal subunit protein uL13 (154 aa).

It belongs to the universal ribosomal protein uL13 family. In terms of assembly, part of the 50S ribosomal subunit.

Its function is as follows. This protein is one of the early assembly proteins of the 50S ribosomal subunit, although it is not seen to bind rRNA by itself. It is important during the early stages of 50S assembly. The polypeptide is Large ribosomal subunit protein uL13 (Rhizobium etli (strain ATCC 51251 / DSM 11541 / JCM 21823 / NBRC 15573 / CFN 42)).